We begin with the raw amino-acid sequence, 130 residues long: kinetoplast-associated protein 2-1 (130 aa).

Residues 1–10 (MLRRTVSNFA) constitute a propeptide that is removed on maturation. The tract at residues 89–130 (LTKKWNETKQAQREKAQKAQKKTKSAKSKVKKAAKKSKKSKK) is disordered. Basic and acidic residues predominate over residues 92–105 (KWNETKQAQREKAQ). The segment covering 106–130 (KAQKKTKSAKSKVKKAAKKSKKSKK) has biased composition (basic residues).

This sequence belongs to the KAP family. In terms of assembly, associates with the kinetoplast DNA network.

Its subcellular location is the mitochondrion matrix. It is found in the kinetoplast. Functionally, histone H1-like DNA-binding protein involved in the organization and segregation of kinetoplast DNA (kDNA). The mitochondrial DNA of kinetoplastid protozoa consists of about 5,000 minicircles and 20 to 30 maxicircles. These circular DNAs are held together by catenation into a highly organized compact disk structure referred to as a kinetoplast DNA (kDNA) network. Binds preferentially to a specific fragment of minicircle DNA and is able to compact kDNA networks through DNA charge neutralization and condensation. The chain is kinetoplast-associated protein 2-1 (KAP2-1) from Crithidia fasciculata.